A 260-amino-acid chain; its full sequence is Cobalt transport protein CbiM (260 aa).

The first 34 residues, Met1–Ala34, serve as a signal peptide directing secretion. Transmembrane regions (helical) follow at residues Glu39–Ile59, Leu77–Phe97, Leu109–Phe129, Leu132–Met152, Ile175–Gly195, and Val215–Phe235.

This sequence belongs to the CbiM family. As to quaternary structure, forms an energy-coupling factor (ECF) transporter complex composed of an ATP-binding protein (A component, CbiO), a transmembrane protein (T component, CbiQ) and 2 possible substrate-capture proteins (S components, CbiM and CbiN) of unknown stoichimetry.

It localises to the cell membrane. Its pathway is cofactor biosynthesis; adenosylcobalamin biosynthesis. Its function is as follows. Part of the energy-coupling factor (ECF) transporter complex CbiMNOQ involved in cobalt import. The polypeptide is Cobalt transport protein CbiM (Clostridium cellulovorans (strain ATCC 35296 / DSM 3052 / OCM 3 / 743B)).